The chain runs to 949 residues: Thrombospondin-4-B (949 aa).

A signal peptide spans 1–22 (MAGTMHLLTAVSLILMLSSANA). In terms of domain architecture, Laminin G-like spans 23 to 198 (ESTVYNLLTS…LEELKLAYGD (176 aa)). Disulfide bonds link Cys-276–Cys-287, Cys-281–Cys-296, Cys-299–Cys-310, Cys-316–Cys-327, Cys-321–Cys-336, Cys-339–Cys-363, Cys-369–Cys-383, Cys-377–Cys-392, Cys-395–Cys-407, Cys-413–Cys-427, Cys-421–Cys-437, Cys-439–Cys-450, Cys-466–Cys-471, Cys-476–Cys-496, Cys-512–Cys-532, Cys-535–Cys-555, Cys-571–Cys-591, Cys-594–Cys-614, Cys-632–Cys-652, Cys-672–Cys-692, and Cys-708–Cys-929. One can recognise an EGF-like 1; calcium-binding domain in the interval 312 to 349 (DVDECQFNPCFPGVRCVNMAPGFRCEACPLGFTGKPLE). An EGF-like 2; calcium-binding domain is found at 365–408 (DIDECKGPDNGGCTANSICVNSVGSYQCGRCKTGFTGDQIRGCK). The EGF-like 3 domain maps to 409 to 451 (PEKSCGNRLQNPCDPNAQCTEERDGTITCQCGIGWAGNGYLCG). TSP type-3 repeat units follow at residues 452 to 484 (KDTD…NSGQ), 485 to 520 (EDAD…NINQ), 521 to 543 (QNSD…NPDQ), 544 to 579 (RDTD…NRDQ), 580 to 602 (LDRD…NPNQ), 603 to 640 (SDID…NSSQ), 641 to 680 (LDTD…NPEQ), and 681 to 716 (IDDN…EITL). The interval 578-671 (DQLDRDGDGV…PDSLPPGPDN (94 aa)) is disordered. N-linked (GlcNAc...) asparagine glycosylation is found at Asn-601 and Asn-637. The segment covering 649-660 (GDECDDDDDNDG) has biased composition (acidic residues). The region spanning 720 to 934 (RAYQTVVLDP…LKYRCNDTIP (215 aa)) is the TSP C-terminal domain. N-linked (GlcNAc...) asparagine glycosylation occurs at Asn-930.

The protein belongs to the thrombospondin family. As to quaternary structure, homotrimer; disulfide-linked.

It localises to the endoplasmic reticulum. The protein resides in the sarcoplasmic reticulum. The protein localises to the secreted. Its subcellular location is the extracellular space. It is found in the extracellular matrix. Adhesive glycoprotein that mediates cell-to-cell and cell-to-matrix interactions and may be involved in various processes including cellular proliferation, migration, adhesion and attachment. May play a role in ER stress response. The chain is Thrombospondin-4-B (thbs4b) from Danio rerio (Zebrafish).